The following is a 517-amino-acid chain: Glycosyltransferase family 92 protein F55C10.4 (517 aa).

A helical transmembrane segment spans residues 9–31 (FLKYFIIFTFFCVTFCFLKLCLG). One can recognise a GT92 domain in the interval 156 to 454 (KPVIFCVSPQ…FKCYNESFYH (299 aa)).

Belongs to the glycosyltransferase 92 family.

It localises to the membrane. The sequence is that of Glycosyltransferase family 92 protein F55C10.4 from Caenorhabditis elegans.